The following is a 715-amino-acid chain: Gelsolin, cytoplasmic (715 aa).

Residues 1–124 are actin-severing; it reads MTTELEIQKA…YLIGGVASGF (124 aa). One copy of the Gelsolin-like 1 repeat lies at 24–75; sequence FELVPVPKTNHGKFYTGDSYIILKTTALESGRGFEWNLHYWQGKESSQDERG. Residues 72-75 are actin-actin interfilament contact point; that stretch reads DERG. A 1,2-diacyl-sn-glycero-3-phospho-(1D-myo-inositol-4,5-bisphosphate) is bound at residue 136-145; the sequence is KVLTRVKGKR. Gelsolin-like repeat units lie at residues 147–187, 260–306, and 405–451; these read VRAT…FEKN, LKIT…TERA, and LRKE…NERT. An actin-binding, Ca-sensitive region spans residues 384 to 715; it reads AAESKMIDDG…FLGWDKTLWD (332 aa). Ca(2+) is bound by residues Gly421, Asp422, Glu449, Thr499, Asn539, Asp540, Glu562, Asp642, and Glu665. Gelsolin-like repeat units lie at residues 524–564 and 625–667; these read CRAV…SEIQ and FIAE…EEKM.

Belongs to the villin/gelsolin family. Predominantly in the body wall muscle, but expression is not restricted to muscle cells.

Its subcellular location is the cytoplasm. It localises to the cytoskeleton. Calcium-regulated, actin-modulating protein that binds to the plus (or barbed) ends of actin monomers or filaments, preventing monomer exchange (end-blocking or capping). It can promote the assembly of monomers into filaments (nucleation) as well as sever filaments already formed. The sequence is that of Gelsolin, cytoplasmic from Halocynthia roretzi (Sea squirt).